Consider the following 1318-residue polypeptide: Ubiquitin carboxyl-terminal hydrolase 19 (1318 aa).

The interval 1–109 is disordered; that stretch reads MSGGASATGP…GACEDPHDLL (109 aa). Residues 1–1291 lie on the Cytoplasmic side of the membrane; sequence MSGGASATGP…TTPDEGCLRY (1291 aa). The segment covering 28–44 has biased composition (basic and acidic residues); sequence DRANQESKDGDPRKETG. The segment covering 83-94 has biased composition (polar residues); sequence PSSSGSASTPQE. Over residues 95-107 the composition is skewed to basic and acidic residues; the sequence is EQTKEGACEDPHD. In terms of domain architecture, CS 1 spans 113 to 202; that stretch reads TPELLLDWRQ…VPMLTWPSLL (90 aa). A disordered region spans residues 234-255; sequence KAVPPGNDPVSPAMVRSRNPGK. Phosphoserine is present on Ser244. Residues 282 to 384 form the CS 2 domain; the sequence is LAFVKNDSYE…RQSQRWGGLE (103 aa). A disordered region spans residues 390-479; that stretch reads VGGAKVAVPT…PMPHSPVSGD (90 aa). Composition is skewed to basic and acidic residues over residues 420–436 and 447–457; these read EEAR…RSED and PMEHVTPKPET. The 718-residue stretch at 497–1214 folds into the USP domain; sequence TGLVNLGNTC…YAYVLFYRRR (718 aa). Catalysis depends on Cys506, which acts as the Nucleophile. Cys791, Cys794, Cys808, Cys811, Cys817, Cys821, His829, and Cys833 together coordinate Zn(2+). Residues 791–833 form an MYND-type zinc finger; sequence CAACQRKQQSEDEKLKRCTRCYRVGYCNQLCQKTHWPDHKGLC. The active-site Proton acceptor is His1165. Residues 1218–1232 are compositionally biased toward basic and acidic residues; the sequence is VERPPRAGHSEHHPD. The segment at 1218–1239 is disordered; the sequence is VERPPRAGHSEHHPDLGPAAEA. A helical transmembrane segment spans residues 1292–1312; that stretch reads FVLGTVAALVALVLNVFYPLV. Over 1313–1318 the chain is Lumenal; sequence SQSRWR.

The protein belongs to the peptidase C19 family. Interacts with RNF123. Interacts with BIRC2/c-IAP1, BIRC3/c-IAP2 and XIAP/BIRC4. Interacts with HIF1A (via N-terminus). Interacts (via N-terminus) with HSP90AA1; this interaction activates the deubiquitinase activity of USP19.

It is found in the endoplasmic reticulum membrane. The enzyme catalyses Thiol-dependent hydrolysis of ester, thioester, amide, peptide and isopeptide bonds formed by the C-terminal Gly of ubiquitin (a 76-residue protein attached to proteins as an intracellular targeting signal).. Deubiquitinating enzyme that regulates the degradation of various proteins by removing ubiquitin moieties, thereby preventing their proteasomal degradation. Stabilizes RNF123, which promotes CDKN1B degradation and contributes to cell proliferation. Decreases the levels of ubiquitinated proteins during skeletal muscle formation and acts to repress myogenesis. Modulates transcription of major myofibrillar proteins. Also involved in turnover of endoplasmic-reticulum-associated degradation (ERAD) substrates. Mechanistically, deubiquitinates and thereby stabilizes several E3 ligases involved in the ERAD pathway including SYVN1 or MARCHF6. Regulates the stability of other E3 ligases including BIRC2/c-IAP1 and BIRC3/c-IAP2 by preventing their ubiquitination. Required for cells to mount an appropriate response to hypoxia by rescuing HIF1A from degradation in a non-catalytic manner and by mediating the deubiquitination of FUNDC1. Attenuates mitochondrial damage and ferroptosis by targeting and stabilizing NADPH oxidase 4/NOX4. Negatively regulates TNF-alpha- and IL-1beta-triggered NF-kappa-B activation by hydrolyzing 'Lys-27'- and 'Lys-63'-linked polyubiquitin chains from MAP3K7. Modulates also the protein level and aggregation of polyQ-expanded huntingtin/HTT through HSP90AA1. This Homo sapiens (Human) protein is Ubiquitin carboxyl-terminal hydrolase 19 (USP19).